We begin with the raw amino-acid sequence, 40 residues long: WCSTCLDLECGASRECYDPCFKAFGRAHGKCMNNKCRCYT.

4 disulfide bridges follow: cysteine 2–cysteine 5, cysteine 10–cysteine 31, cysteine 16–cysteine 36, and cysteine 20–cysteine 38.

As to expression, expressed by the venom gland.

The protein localises to the secreted. Inhibits high conductance calcium-activated potassium channels (KCNMA). Inhibits Shaker B potassium channels. This chain is Potassium channel toxin alpha-KTx 12.3, found in Tityus costatus (Brazilian scorpion).